Here is a 208-residue protein sequence, read N- to C-terminus: Small ribosomal subunit protein uS4 (208 aa).

Residues Q98 to L163 enclose the S4 RNA-binding domain.

This sequence belongs to the universal ribosomal protein uS4 family. In terms of assembly, part of the 30S ribosomal subunit. Contacts protein S5. The interaction surface between S4 and S5 is involved in control of translational fidelity.

Its function is as follows. One of the primary rRNA binding proteins, it binds directly to 16S rRNA where it nucleates assembly of the body of the 30S subunit. In terms of biological role, with S5 and S12 plays an important role in translational accuracy. The sequence is that of Small ribosomal subunit protein uS4 from Campylobacter jejuni (strain RM1221).